We begin with the raw amino-acid sequence, 37 residues long: Large ribosomal subunit protein bL36c (37 aa).

It belongs to the bacterial ribosomal protein bL36 family.

The protein localises to the plastid. It localises to the chloroplast. The chain is Large ribosomal subunit protein bL36c from Lolium perenne (Perennial ryegrass).